The chain runs to 330 residues: ADP-L-glycero-D-manno-heptose-6-epimerase (330 aa).

Residues 11–12 (FI), 32–33 (DD), Gln-39, Gln-54, 75–79 (QGACA), and Asn-92 each bind NADP(+). Residue Tyr-139 is the Proton acceptor of the active site. Lys-143 provides a ligand contact to NADP(+). Asn-168 serves as a coordination point for substrate. Positions 169 and 177 each coordinate NADP(+). Catalysis depends on Lys-177, which acts as the Proton acceptor. Residues Arg-179, His-186, 200–203 (FGEH), Arg-213, and Tyr-292 each bind substrate.

This sequence belongs to the NAD(P)-dependent epimerase/dehydratase family. HldD subfamily. As to quaternary structure, homopentamer. NADP(+) is required as a cofactor.

It carries out the reaction ADP-D-glycero-beta-D-manno-heptose = ADP-L-glycero-beta-D-manno-heptose. It functions in the pathway nucleotide-sugar biosynthesis; ADP-L-glycero-beta-D-manno-heptose biosynthesis; ADP-L-glycero-beta-D-manno-heptose from D-glycero-beta-D-manno-heptose 7-phosphate: step 4/4. Its function is as follows. Catalyzes the interconversion between ADP-D-glycero-beta-D-manno-heptose and ADP-L-glycero-beta-D-manno-heptose via an epimerization at carbon 6 of the heptose. The sequence is that of ADP-L-glycero-D-manno-heptose-6-epimerase from Pseudomonas aeruginosa (strain UCBPP-PA14).